The primary structure comprises 190 residues: Protein LZIC (190 aa).

Residues 2-63 (ASRGKTETSK…SEFNDSLKKI (62 aa)) adopt a coiled-coil conformation.

The protein belongs to the CTNNBIP1 family. As to quaternary structure, does not interact with CTNNB1. Ubiquitously expressed, with highest levels in kidney. Up-regulated in several cases of gastric cancers.

This is Protein LZIC (LZIC) from Homo sapiens (Human).